The chain runs to 219 residues: 7-cyano-7-deazaguanine synthase (219 aa).

Position 10–20 (10–20 (FSGGQDSTTCL)) interacts with ATP. The Zn(2+) site is built by Cys-188, Cys-197, Cys-200, and Cys-203.

Belongs to the QueC family. In terms of assembly, homodimer. Zn(2+) serves as cofactor.

It catalyses the reaction 7-carboxy-7-deazaguanine + NH4(+) + ATP = 7-cyano-7-deazaguanine + ADP + phosphate + H2O + H(+). It functions in the pathway purine metabolism; 7-cyano-7-deazaguanine biosynthesis. Its function is as follows. Catalyzes the ATP-dependent conversion of 7-carboxy-7-deazaguanine (CDG) to 7-cyano-7-deazaguanine (preQ(0)). In Clostridium botulinum (strain 657 / Type Ba4), this protein is 7-cyano-7-deazaguanine synthase.